The chain runs to 568 residues: Nucleoprotein (568 aa).

Residues M54 to I240 are binding site for the cap structure m7GTP. D388 and E390 together coordinate Mn(2+). The Zn(2+) site is built by E398, C505, H508, and C528. Residue D532 coordinates Mn(2+).

It belongs to the arenaviridae nucleocapsid protein family. As to quaternary structure, homomultimerizes to form the nucleocapsid. Binds to viral genomic RNA. Interacts with glycoprotein G2. Interacts with protein Z; this interaction probably directs the encapsidated genome to budding sites. Interacts with protein L; this interaction does not interfere with Z-L interaction. Interacts with host IKBKE (via Protein kinase domain); the interaction inhibits IKBKE kinase activity.

It is found in the virion. It localises to the host cytoplasm. Its function is as follows. Encapsidates the genome, protecting it from nucleases. The encapsidated genomic RNA is termed the nucleocapsid (NC). Serves as template for viral transcription and replication. The increased presence of protein N in host cell does not seem to trigger the switch from transcription to replication as observed in other negative strain RNA viruses. Through the interaction with host IKBKE, strongly inhibits the phosphorylation and nuclear translocation of host IRF3, a protein involved in interferon activation pathway, leading to the inhibition of interferon-beta and IRF3-dependent promoters activation. Also encodes a functional 3'-5' exoribonuclease that degrades preferentially dsRNA substrates and thereby participates in the suppression of interferon induction. This chain is Nucleoprotein, found in Praomys (African soft-furred rats).